A 306-amino-acid polypeptide reads, in one-letter code: Non-homologous end joining protein Ku 2 (306 aa).

The region spanning 21–206 is the Ku domain; sequence ISFGLVNIGV…EVSKQEIDMA (186 aa). Positions 233-306 are disordered; that stretch reads LIDAKTKGTK…GSRDKTRKRA (74 aa). A compositionally biased stretch (basic residues) spans 274 to 290; sequence RTSRRKTTASASRRRSS. Residues 291-300 are compositionally biased toward basic and acidic residues; the sequence is SNREKTGSRD.

It belongs to the prokaryotic Ku family. In terms of assembly, homodimer. Interacts with LigD.

Its function is as follows. With LigD forms a non-homologous end joining (NHEJ) DNA repair enzyme, which repairs dsDNA breaks with reduced fidelity. Binds linear dsDNA with 5'- and 3'- overhangs but not closed circular dsDNA nor ssDNA. Recruits and stimulates the ligase activity of LigD. This is Non-homologous end joining protein Ku 2 from Saccharopolyspora erythraea (strain ATCC 11635 / DSM 40517 / JCM 4748 / NBRC 13426 / NCIMB 8594 / NRRL 2338).